A 262-amino-acid chain; its full sequence is Glutamate racemase (262 aa).

Substrate-binding positions include 9–10 (DS) and 41–42 (YG). The active-site Proton donor/acceptor is the Cys73. 74–75 (NT) contacts substrate. Cys180 functions as the Proton donor/acceptor in the catalytic mechanism. 181–182 (TH) serves as a coordination point for substrate.

This sequence belongs to the aspartate/glutamate racemases family.

It catalyses the reaction L-glutamate = D-glutamate. The protein operates within cell wall biogenesis; peptidoglycan biosynthesis. Provides the (R)-glutamate required for cell wall biosynthesis. The chain is Glutamate racemase from Aliivibrio fischeri (strain ATCC 700601 / ES114) (Vibrio fischeri).